The chain runs to 190 residues: Dirigent protein 15 (190 aa).

The N-terminal stretch at 1–19 (MKSTLIIFFTLCLSMAVMA) is a signal peptide. N-linked (GlcNAc...) asparagine glycosylation is found at asparagine 63 and asparagine 128.

This sequence belongs to the plant dirigent protein family. Homodimer.

It localises to the secreted. Its subcellular location is the extracellular space. The protein localises to the apoplast. In terms of biological role, dirigent proteins impart stereoselectivity on the phenoxy radical-coupling reaction, yielding optically active lignans from two molecules of coniferyl alcohol in the biosynthesis of lignans, flavonolignans, and alkaloids and thus plays a central role in plant secondary metabolism. The sequence is that of Dirigent protein 15 (DIR15) from Arabidopsis thaliana (Mouse-ear cress).